A 427-amino-acid polypeptide reads, in one-letter code: Tryptophan synthase beta chain 1 (427 aa).

At Lys107 the chain carries N6-(pyridoxal phosphate)lysine.

It belongs to the TrpB family. In terms of assembly, tetramer of two alpha and two beta chains. Pyridoxal 5'-phosphate serves as cofactor.

It carries out the reaction (1S,2R)-1-C-(indol-3-yl)glycerol 3-phosphate + L-serine = D-glyceraldehyde 3-phosphate + L-tryptophan + H2O. Its pathway is amino-acid biosynthesis; L-tryptophan biosynthesis; L-tryptophan from chorismate: step 5/5. Functionally, the beta subunit is responsible for the synthesis of L-tryptophan from indole and L-serine. The protein is Tryptophan synthase beta chain 1 (trpB1) of Aeropyrum pernix (strain ATCC 700893 / DSM 11879 / JCM 9820 / NBRC 100138 / K1).